The sequence spans 381 residues: Creatine kinase M-type (381 aa).

One can recognise a Phosphagen kinase N-terminal domain in the interval 11-98 (KLNYSAAEEF…FDPVIEDRHG (88 aa)). Residues 125–367 (YVLSSRVRTG…KLMVEMEKRL (243 aa)) enclose the Phosphagen kinase C-terminal domain. ATP contacts are provided by residues 128–132 (SSRVR), histidine 191, arginine 236, arginine 292, 320–325 (RGTGGV), and aspartate 335.

This sequence belongs to the ATP:guanido phosphotransferase family. Dimer of identical or non-identical chains. With MM being the major form in skeletal muscle and myocardium, MB existing in myocardium, and BB existing in many tissues, especially brain.

The protein localises to the cytoplasm. It catalyses the reaction creatine + ATP = N-phosphocreatine + ADP + H(+). Functionally, reversibly catalyzes the transfer of phosphate between ATP and various phosphogens (e.g. creatine phosphate). Creatine kinase isoenzymes play a central role in energy transduction in tissues with large, fluctuating energy demands, such as skeletal muscle, heart, brain and spermatozoa. This Tetronarce californica (Pacific electric ray) protein is Creatine kinase M-type.